Here is a 451-residue protein sequence, read N- to C-terminus: Photosystem II CP43 reaction center protein (451 aa).

Residues 1–46 (ATNRDQESSGFAWWAGNARLINLSGKLLGAHVAHAGLIVFWAGAMT) are Cytoplasmic-facing. Residues W13, L27, and A30 each coordinate chlorophyll a. Residues 47 to 71 (LFELAHFIPEKPMYEQGLILIPHIA) traverse the membrane as a helical segment. The Lumenal segment spans residues 72 to 111 (TLGWGVGPGGEVVDTFPFFVVGVVHLISSAVLGFGGVYHA). Chlorophyll a contacts are provided by V92 and G106. The helical transmembrane segment at 112–133 (IRGPETLEEYSSFFGYDWKDKN) threads the bilayer. Residues 134–155 (KMTTILGFHLIVLGIGALLLVA) lie on the Cytoplasmic side of the membrane. Residue I138 participates in chlorophyll a binding. The helical transmembrane segment at 156 to 178 (KAMFFGGLYDTWAPGGGDVRVIT) threads the bilayer. At 179-232 (NPTLDPRVIFGYLLKSPFGGEGWIVSVNNLEDVVGGHIWIGLICIAGGIWHILT) the chain is on the lumenal side. Chlorophyll a is bound by residues V211 and G225. A helical transmembrane segment spans residues 233–253 (TPFGWARRAFIWSGEAYLSYS). Residues 254-268 (LGALSMMGFIATCFV) are Cytoplasmic-facing. The helical transmembrane segment at 269–290 (WFNNTVYPSEFYGPTGPEASQA) threads the bilayer. Residues 291-424 (QAMTFLIRDQ…FLVGHLWHAG (134 aa)) are Lumenal-facing. E345 serves as a coordination point for [CaMn4O5] cluster. Chlorophyll a is bound by residues L404, F415, and G418. Residues 425-449 (RARAAAAGFEKGIDRESEPVLSMPS) traverse the membrane as a helical segment. Over 450–451 (LD) the chain is Cytoplasmic.

This sequence belongs to the PsbB/PsbC family. PsbC subfamily. As to quaternary structure, PSII is composed of 1 copy each of membrane proteins PsbA, PsbB, PsbC, PsbD, PsbE, PsbF, PsbH, PsbI, PsbJ, PsbK, PsbL, PsbM, PsbT, PsbX, PsbY, PsbZ, Psb30/Ycf12, peripheral proteins PsbO, CyanoQ (PsbQ), PsbU, PsbV and a large number of cofactors. It forms dimeric complexes. Binds multiple chlorophylls and provides some of the ligands for the Ca-4Mn-5O cluster of the oxygen-evolving complex. It may also provide a ligand for a Cl- that is required for oxygen evolution. PSII binds additional chlorophylls, carotenoids and specific lipids. serves as cofactor.

Its subcellular location is the cellular thylakoid membrane. In terms of biological role, one of the components of the core complex of photosystem II (PSII). It binds chlorophyll and helps catalyze the primary light-induced photochemical processes of PSII. PSII is a light-driven water:plastoquinone oxidoreductase, using light energy to abstract electrons from H(2)O, generating O(2) and a proton gradient subsequently used for ATP formation. The chain is Photosystem II CP43 reaction center protein from Thermostichus vulcanus (Synechococcus vulcanus).